Reading from the N-terminus, the 100-residue chain is Integration host factor subunit alpha (100 aa).

Positions 53–72 are disordered; that stretch reads FQLRDKPQRPGRNPKTGEEV.

The protein belongs to the bacterial histone-like protein family. In terms of assembly, heterodimer of an alpha and a beta chain.

Its function is as follows. This protein is one of the two subunits of integration host factor, a specific DNA-binding protein that functions in genetic recombination as well as in transcriptional and translational control. The sequence is that of Integration host factor subunit alpha from Neisseria gonorrhoeae (strain ATCC 700825 / FA 1090).